Here is a 116-residue protein sequence, read N- to C-terminus: Large ribosomal subunit protein uL18 (116 aa).

The protein belongs to the universal ribosomal protein uL18 family. In terms of assembly, part of the 50S ribosomal subunit; part of the 5S rRNA/L5/L18/L25 subcomplex. Contacts the 5S and 23S rRNAs.

This is one of the proteins that bind and probably mediate the attachment of the 5S RNA into the large ribosomal subunit, where it forms part of the central protuberance. This chain is Large ribosomal subunit protein uL18, found in Shewanella sp. (strain ANA-3).